Reading from the N-terminus, the 190-residue chain is Protein hunchback (190 aa).

Disordered regions lie at residues 13–59 (EPMS…SSNL), 86–110 (AAMT…PNPM), and 142–190 (QTND…KYMA). Basic residues predominate over residues 17-31 (HHHHHSHHHGHHHML). Residues 90-100 (PSPSNNDQNSP) show a composition bias toward polar residues. Residues 171–190 (EPEKDHDLISNSSEDMKYMA) show a composition bias toward basic and acidic residues.

This sequence belongs to the hunchback C2H2-type zinc-finger protein family.

It localises to the nucleus. Functionally, gap class segmentation protein that controls development of head structures. The chain is Protein hunchback (hb) from Scaptomyza crassifemur (Fruit fly).